The chain runs to 355 residues: U5 small nuclear ribonucleoprotein 40 kDa protein (355 aa).

WD repeat units follow at residues 60 to 99 (GHKG…INYS), 103 to 142 (GHKG…LIKR), 145 to 185 (EHSG…STHL), 187 to 226 (QHKY…DPLY), 230 to 269 (SHQD…PPNR), 280 to 319 (NFEK…LQYC), and 322 to 355 (GHSG…EIKP).

As to quaternary structure, component of the pre-catalytic and catalytic spliceosome complexes. Component of the postcatalytic spliceosome P complex. Part of the U5 snRNP complex. Component of the U4/U6-U5 tri-snRNP complex.

It localises to the nucleus. In terms of biological role, required for pre-mRNA splicing as component of the activated spliceosome. Component of the U5 small nuclear ribonucleoprotein (snRNP) complex and the U4/U6-U5 tri-snRNP complex, building blocks of the spliceosome. The polypeptide is U5 small nuclear ribonucleoprotein 40 kDa protein (snrnp40) (Dictyostelium discoideum (Social amoeba)).